Reading from the N-terminus, the 666-residue chain is tRNA 5-methylaminomethyl-2-thiouridine biosynthesis bifunctional protein MnmC (666 aa).

The segment at 1 to 245 (MKQYAIQPAN…KREMLCGVMA (245 aa)) is tRNA (mnm(5)s(2)U34)-methyltransferase. The FAD-dependent cmnm(5)s(2)U34 oxidoreductase stretch occupies residues 270 to 666 (IGGGIASALL…RKLLKGKAVK (397 aa)).

It in the N-terminal section; belongs to the methyltransferase superfamily. tRNA (mnm(5)s(2)U34)-methyltransferase family. This sequence in the C-terminal section; belongs to the DAO family. FAD is required as a cofactor.

The protein resides in the cytoplasm. It carries out the reaction 5-aminomethyl-2-thiouridine(34) in tRNA + S-adenosyl-L-methionine = 5-methylaminomethyl-2-thiouridine(34) in tRNA + S-adenosyl-L-homocysteine + H(+). In terms of biological role, catalyzes the last two steps in the biosynthesis of 5-methylaminomethyl-2-thiouridine (mnm(5)s(2)U) at the wobble position (U34) in tRNA. Catalyzes the FAD-dependent demodification of cmnm(5)s(2)U34 to nm(5)s(2)U34, followed by the transfer of a methyl group from S-adenosyl-L-methionine to nm(5)s(2)U34, to form mnm(5)s(2)U34. This is tRNA 5-methylaminomethyl-2-thiouridine biosynthesis bifunctional protein MnmC from Citrobacter koseri (strain ATCC BAA-895 / CDC 4225-83 / SGSC4696).